The chain runs to 371 residues: Cytochrome b (371 aa).

4 consecutive transmembrane segments (helical) span residues 25-45, 69-90, 105-125, and 170-190; these read FGSMLLICLTLQIMTGFFLAI, WIMQNLHTIGASMFFICIYTHI, WLSGTTLLITLMATAFFGYVL, and FFALHFIIPFAIISLSSIHII. The heme b site is built by His75 and His89. Residues His174 and His188 each contribute to the heme b site. His193 contacts a ubiquinone. 4 helical membrane passes run 218–238, 280–300, 312–332, and 339–358; these read YKDTLTSTFMLITLFIILSFT, LGGTLALLMSVIILTTMPFTH, LAQTMFWMLIATFITITWTAS, and FIIISQTTSIFYFSFFIMNP.

It belongs to the cytochrome b family. As to quaternary structure, the cytochrome bc1 complex contains 3 respiratory subunits (MT-CYB, CYC1 and UQCRFS1), 2 core proteins (UQCRC1 and UQCRC2) and probably 6 low-molecular weight proteins. Requires heme b as cofactor.

Its subcellular location is the mitochondrion inner membrane. Its function is as follows. Component of the ubiquinol-cytochrome c reductase complex (complex III or cytochrome b-c1 complex) that is part of the mitochondrial respiratory chain. The b-c1 complex mediates electron transfer from ubiquinol to cytochrome c. Contributes to the generation of a proton gradient across the mitochondrial membrane that is then used for ATP synthesis. This is Cytochrome b (MT-CYB) from Sinomicrurus macclellandi (Macclelland's coral snake).